The following is a 463-amino-acid chain: GTPase Der (463 aa).

2 EngA-type G domains span residues K2 to K164 and I198 to T369. GTP is bound by residues G8–S15, D55–L59, N116–D119, G204–S211, D251–I255, and N315–D318. One can recognise a KH-like domain in the interval Q370–S454.

This sequence belongs to the TRAFAC class TrmE-Era-EngA-EngB-Septin-like GTPase superfamily. EngA (Der) GTPase family. As to quaternary structure, associates with the 50S ribosomal subunit.

In terms of biological role, GTPase that plays an essential role in the late steps of ribosome biogenesis. This Campylobacter fetus subsp. fetus (strain 82-40) protein is GTPase Der.